A 93-amino-acid polypeptide reads, in one-letter code: uncharacterized protein (93 aa).

2 helical membrane passes run 8-28 (FIGI…LLAS) and 54-74 (ACFL…YLIL).

The protein resides in the cell membrane. This is an uncharacterized protein from Methanocaldococcus jannaschii (strain ATCC 43067 / DSM 2661 / JAL-1 / JCM 10045 / NBRC 100440) (Methanococcus jannaschii).